Here is a 655-residue protein sequence, read N- to C-terminus: Cyclomaltodextrin glucanotransferase (655 aa).

An N-terminal signal peptide occupies residues 1-30; the sequence is MKRNRFFNTSAAIAISIALNTFFCSMQTIA. Ca(2+) contacts are provided by Asp-55, Asn-60, Asn-61, Gly-79, and Asp-81. 123-124 is a substrate binding site; sequence YW. Asn-164 serves as a coordination point for Ca(2+). Substrate contacts are provided by residues His-165 and 217-220; that span reads NLFN. A Ca(2+)-binding site is contributed by Asp-223. Position 251 (Arg-251) interacts with substrate. Residue Asp-253 is the Nucleophile of the active site. Position 256 to 257 (256 to 257) interacts with substrate; that stretch reads KH. Residue His-257 coordinates Ca(2+). The Proton donor role is filled by Glu-287. Positions 362, 436, and 440 each coordinate substrate. A CBM20 domain is found at 554-655; the sequence is AENPTVQSIN…NDTQTTNGSF (102 aa). Residues 630–655 form a disordered region; that stretch reads TANVEWQSGANNQFNSNDTQTTNGSF.

The protein belongs to the glycosyl hydrolase 13 family. In terms of assembly, monomer. The cofactor is Ca(2+).

It catalyses the reaction Cyclizes part of a (1-&gt;4)-alpha-D-glucan chain by formation of a (1-&gt;4)-alpha-D-glucosidic bond.. The sequence is that of Cyclomaltodextrin glucanotransferase (cgt) from Klebsiella oxytoca.